Consider the following 429-residue polypeptide: Serine hydroxymethyltransferase (429 aa).

Residues L130 and G134–L136 each bind (6S)-5,6,7,8-tetrahydrofolate. An N6-(pyridoxal phosphate)lysine modification is found at K239.

This sequence belongs to the SHMT family. Homodimer. Requires pyridoxal 5'-phosphate as cofactor.

Its subcellular location is the cytoplasm. It carries out the reaction (6R)-5,10-methylene-5,6,7,8-tetrahydrofolate + glycine + H2O = (6S)-5,6,7,8-tetrahydrofolate + L-serine. It functions in the pathway one-carbon metabolism; tetrahydrofolate interconversion. Its pathway is amino-acid biosynthesis; glycine biosynthesis; glycine from L-serine: step 1/1. Functionally, catalyzes the reversible interconversion of serine and glycine with tetrahydrofolate (THF) serving as the one-carbon carrier. This reaction serves as the major source of one-carbon groups required for the biosynthesis of purines, thymidylate, methionine, and other important biomolecules. Also exhibits THF-independent aldolase activity toward beta-hydroxyamino acids, producing glycine and aldehydes, via a retro-aldol mechanism. The chain is Serine hydroxymethyltransferase from Phenylobacterium zucineum (strain HLK1).